Reading from the N-terminus, the 474-residue chain is Cysteine--tRNA ligase (474 aa).

A Zn(2+)-binding site is contributed by cysteine 28. A 'HIGH' region motif is present at residues 30–40 (ITVYDLCHLGH). Positions 209, 234, and 238 each coordinate Zn(2+). The 'KMSKS' region motif lies at 269-273 (KMSKS). Lysine 272 contacts ATP.

Belongs to the class-I aminoacyl-tRNA synthetase family. As to quaternary structure, monomer. Requires Zn(2+) as cofactor.

The protein resides in the cytoplasm. The catalysed reaction is tRNA(Cys) + L-cysteine + ATP = L-cysteinyl-tRNA(Cys) + AMP + diphosphate. This Blochmanniella floridana protein is Cysteine--tRNA ligase.